Reading from the N-terminus, the 269-residue chain is 5'-nucleotidase SurE (269 aa).

Aspartate 11, aspartate 12, serine 43, and asparagine 101 together coordinate a divalent metal cation.

The protein belongs to the SurE nucleotidase family. Requires a divalent metal cation as cofactor.

It localises to the cytoplasm. The enzyme catalyses a ribonucleoside 5'-phosphate + H2O = a ribonucleoside + phosphate. Nucleotidase that shows phosphatase activity on nucleoside 5'-monophosphates. The protein is 5'-nucleotidase SurE of Synechococcus sp. (strain CC9902).